The sequence spans 143 residues: Large ribosomal subunit protein uL11 (143 aa).

Belongs to the universal ribosomal protein uL11 family. In terms of assembly, part of the ribosomal stalk of the 50S ribosomal subunit. Interacts with L10 and the large rRNA to form the base of the stalk. L10 forms an elongated spine to which L12 dimers bind in a sequential fashion forming a multimeric L10(L12)X complex. One or more lysine residues are methylated.

Functionally, forms part of the ribosomal stalk which helps the ribosome interact with GTP-bound translation factors. The chain is Large ribosomal subunit protein uL11 from Erythrobacter litoralis (strain HTCC2594).